An 82-amino-acid chain; its full sequence is Small ribosomal subunit protein uS17 (82 aa).

Belongs to the universal ribosomal protein uS17 family. As to quaternary structure, part of the 30S ribosomal subunit.

One of the primary rRNA binding proteins, it binds specifically to the 5'-end of 16S ribosomal RNA. This Rickettsia typhi (strain ATCC VR-144 / Wilmington) protein is Small ribosomal subunit protein uS17.